The sequence spans 41 residues: Competence-stimulating peptide type 1 (41 aa).

A propeptide spanning residues 1 to 24 (MKNTVKLEQFVALKEKDLQKIKGG) is cleaved from the precursor.

The protein belongs to the ComC family.

The protein localises to the secreted. Functionally, acts as a pheromone, induces cells to develop competence for genetic transformation. This Streptococcus pneumoniae protein is Competence-stimulating peptide type 1 (comC1).